Consider the following 94-residue polypeptide: Small ribosomal subunit protein uS19 (94 aa).

It belongs to the universal ribosomal protein uS19 family.

Its function is as follows. Protein S19 forms a complex with S13 that binds strongly to the 16S ribosomal RNA. This chain is Small ribosomal subunit protein uS19, found in Acidobacterium capsulatum (strain ATCC 51196 / DSM 11244 / BCRC 80197 / JCM 7670 / NBRC 15755 / NCIMB 13165 / 161).